The sequence spans 299 residues: Homeobox protein ceh-24 (299 aa).

Basic and acidic residues predominate over residues 1–35; the sequence is MSEKETPSPVLDVKKEKNEETGIDEEKSSEDDCSK. Disordered regions lie at residues 1-45 and 208-263; these read MSEK…NPSK and QEKE…SGVF. Residues 150–209 constitute a DNA-binding region (homeobox); the sequence is RRKRRVLFSQAQVYELERRFKQAKYLTAPEREQLANSIRLTPTQVKIWFQNHRYKCKRQE. Over residues 242 to 252 the composition is skewed to acidic residues; it reads DDKDDEEEEES.

It belongs to the NK-2 homeobox family. As to expression, expressed in the 8 vulval muscles, 8-10 ventral neurons in the head and in the most posterior pharyngeal muscle cell, m8. Expressed in SIA, SIB and SMB sublateral motor neurons, and in muscles of the pharynx and vulva.

Its subcellular location is the nucleus. Probable transcriptional regulator that is required in neural development for the normal formation of sublateral cholinergic motor neuron processes. Plays a role in regulating the expression of acetylcholine transporter protein unc-17 in the sublateral processes. In particular, it is required in sublateral motor neurons for a left-right turning behavior that occurs during the lethargus phase of the normal sleep process called 'flipping'. During 'flipping' animals rotate 180 degrees about their longitudinal axis. This Caenorhabditis elegans protein is Homeobox protein ceh-24.